We begin with the raw amino-acid sequence, 103 residues long: Signal recognition particle 19 kDa protein (103 aa).

This sequence belongs to the SRP19 family. As to quaternary structure, part of the signal recognition particle protein translocation system, which is composed of SRP and FtsY. Archaeal SRP consists of a 7S RNA molecule of 300 nucleotides and two protein subunits: SRP54 and SRP19.

It localises to the cytoplasm. Its function is as follows. Involved in targeting and insertion of nascent membrane proteins into the cytoplasmic membrane. Binds directly to 7S RNA and mediates binding of the 54 kDa subunit of the SRP. The polypeptide is Signal recognition particle 19 kDa protein (Methanopyrus kandleri (strain AV19 / DSM 6324 / JCM 9639 / NBRC 100938)).